Here is a 688-residue protein sequence, read N- to C-terminus: Polyribonucleotide nucleotidyltransferase (688 aa).

Positions 484 and 490 each coordinate Mg(2+). The KH domain occupies 550–609 (PTTEIFNVAPDKIVEIIGQGGRVIKEIVEKFEVKIDLNKPSGEVKIMGNKERVLKTKEFI). In terms of domain architecture, S1 motif spans 626-688 (DEVLEAQVKR…NKGKIALDLA (63 aa)).

The protein belongs to the polyribonucleotide nucleotidyltransferase family. Requires Mg(2+) as cofactor.

It localises to the cytoplasm. It carries out the reaction RNA(n+1) + phosphate = RNA(n) + a ribonucleoside 5'-diphosphate. Involved in mRNA degradation. Catalyzes the phosphorolysis of single-stranded polyribonucleotides processively in the 3'- to 5'-direction. The sequence is that of Polyribonucleotide nucleotidyltransferase from Helicobacter pylori (strain ATCC 700392 / 26695) (Campylobacter pylori).